A 676-amino-acid polypeptide reads, in one-letter code: MGTEIPRSAEISEALLPPESEKTVTATEEHVPEWKEQITIRGLTVSALLGTLFCIITHKLNLTVGIIPSLNVAAGLLGFFFVKSWTGFLSKLGFTVKPFTKQENTVIQTCVVACYGLAFSGGFGSYLIAMDEKTYKLIGADYPGNHAEDVINPGLWWMIGFLFVVSFLGLFSLVPLRKVMVLDYKLTYPSGTATAMLINSFHTNTGAELAGNQVKCLGKYLSLSLIWSCFKWFFSGIGDACGFDNFPTLGLTLFKNTFYFDFSPTYIGCGLICPHIVNCSVLLGAIISWGILWPFVSQHAGDWYPADLGSNDFKGLYGYKVFIAIAIILGDGLYNLVKIIAVTVKELCSSRSRRLNLPIVTDGVDDSEASEILLVKKKRDEVFLKDRIPLEFAIAGYVGLAAISTATIPIIFPPLKWYFVLCSYFIAPALAFCNSYGTGLTDWSLASTYGKIGLFIIASVVGSDGGVIAGLAACGVMMSIVSTAADLMQDFKTGYLTLSSAKSMFVSQLVGTAMGCVIAPLTFWLFWTAFDIGDPNGPYKAPYAVIFREMAILGIEGFAELPKHCLALCYGFFIAALIVNLLRDITPPKISQFIPIPMAMAVPFYIGAYFAIDMFVGTVILFVWERINRKDAEDFAGAVASGLICGDGIWTIPSAILSILRINPPICMYFGPSSAR.

Transmembrane regions (helical) follow at residues 38–58 (ITIR…IITH), 62–82 (LTVG…FFFV), 110–130 (CVVA…LIAM), 154–174 (GLWW…FSLV), 276–296 (IVNC…WPFV), 321–341 (VFIA…KIIA), 392–412 (FAIA…PIIF), 413–433 (PPLK…LAFC), 452–472 (IGLF…AGLA), 510–530 (VGTA…WTAF), 561–581 (LPKH…IVNL), 604–624 (FYIG…LFVW), and 639–659 (VASG…ILSI).

It belongs to the YSL (TC 2.A.67.2) family.

Its subcellular location is the membrane. May be involved in the transport of nicotianamine-chelated metals. In Arabidopsis thaliana (Mouse-ear cress), this protein is Probable metal-nicotianamine transporter YSL6 (YSL6).